Reading from the N-terminus, the 95-residue chain is Co-chaperonin GroES (95 aa).

This sequence belongs to the GroES chaperonin family. In terms of assembly, heptamer of 7 subunits arranged in a ring. Interacts with the chaperonin GroEL.

Its subcellular location is the cytoplasm. Its function is as follows. Together with the chaperonin GroEL, plays an essential role in assisting protein folding. The GroEL-GroES system forms a nano-cage that allows encapsulation of the non-native substrate proteins and provides a physical environment optimized to promote and accelerate protein folding. GroES binds to the apical surface of the GroEL ring, thereby capping the opening of the GroEL channel. The chain is Co-chaperonin GroES from Zymomonas mobilis subsp. mobilis (strain ATCC 31821 / ZM4 / CP4).